The following is a 938-amino-acid chain: Nitrate reductase (938 aa).

One can recognise a 4Fe-4S Mo/W bis-MGD-type domain in the interval 1–64; it reads MSVVQSSCAY…RLLDSLAQPN (64 aa). [4Fe-4S] cluster is bound by residues Cys8, Cys11, Cys15, and Cys50.

It belongs to the prokaryotic molybdopterin-containing oxidoreductase family. NasA/NapA/NarB subfamily. Requires [4Fe-4S] cluster as cofactor. Mo-bis(molybdopterin guanine dinucleotide) serves as cofactor.

It localises to the cytoplasm. It carries out the reaction nitrate + a quinol = a quinone + nitrite + H2O. It functions in the pathway nitrogen metabolism; nitrate reduction (assimilation). Its function is as follows. Nitrate reductase is a key enzyme involved in the first step of nitrate assimilation in plants, fungi and bacteria. This Shewanella frigidimarina (strain NCIMB 400) protein is Nitrate reductase.